Reading from the N-terminus, the 565-residue chain is MSSRLGAVPATSGPTTFKQQRSTRIVGAKNRTQCSIKDNSFQYTIPHDDSLSGSSSASSCEPVSDFPASFRKSTYWMKMRRIKPAATSHVEGSGGVSAKGKRKPRQEEDEDYREFPQKKHKLYGRKQRPKTQPNPKSQARRIRKEPPVYAAGSLEEQWYLEIVDKGSVSCPTCQAVGRKTIEGLKKHMENCKQEMFTCHHCGKQLRSLAGMKYHVMANHNSLPILKAGDEIDEPTERERLRTVLKRLGKLRCMRESCSSSFTSIMGYLYHVRKCGKGAAELEKMTLKCHHCGKPYRSKAGLAYHLRSEHGPISFFPESGQPECLKEMNLESKSGGRVQRRSAKIAVYHLQELASAELAKEWPKRKVLQDLVPDDRKLKYTRPGLPTFSQEVLHKWKTDIKKYHRIQCPNQGCEAVYSSVSGLKAHLGSCTLGNFVAGKYKCLLCQKEFVSESGVKYHINSVHAEDWFVVNPTTTKSFEKLMKIKQRQQEEEKRRQQHRSRRSLRRRQQPGIELPETELSLRVGKDQRRNEELVVSASCKEPEQEPVPAQFQKVKPPKTNHKRGRK.

Positions 1–30 (MSSRLGAVPATSGPTTFKQQRSTRIVGAKN) are disordered. Residues 12–23 (SGPTTFKQQRST) show a composition bias toward polar residues. Residues Lys18 and Lys83 each participate in a glycyl lysine isopeptide (Lys-Gly) (interchain with G-Cter in SUMO2) cross-link. The disordered stretch occupies residues 85–147 (AATSHVEGSG…QARRIRKEPP (63 aa)). Residues 118–129 (KKHKLYGRKQRP) show a composition bias toward basic residues. A C2H2-type 1 zinc finger spans residues 196–219 (FTCHHCGKQLRSLAGMKYHVMANH). A Glycyl lysine isopeptide (Lys-Gly) (interchain with G-Cter in SUMO2) cross-link involves residue Lys226. The C2H2-type 2 zinc finger occupies 286–309 (LKCHHCGKPYRSKAGLAYHLRSEH). A Glycyl lysine isopeptide (Lys-Gly) (interchain with G-Cter in SUMO2) cross-link involves residue Lys332. The C2H2-type 3; atypical zinc finger occupies 405–429 (IQCPNQGCEAVYSSVSGLKAHLGSC). The C2H2-type 4 zinc-finger motif lies at 439–462 (YKCLLCQKEFVSESGVKYHINSVH). Residues 484–493 (KQRQQEEEKR) are compositionally biased toward basic and acidic residues. Residues 484–565 (KQRQQEEEKR…PKTNHKRGRK (82 aa)) are disordered. The segment covering 494–507 (RQQHRSRRSLRRRQ) has biased composition (basic residues). Basic and acidic residues predominate over residues 522–531 (VGKDQRRNEE). Over residues 554 to 565 (KPPKTNHKRGRK) the composition is skewed to basic residues.

The protein belongs to the krueppel C2H2-type zinc-finger protein family.

The protein localises to the nucleus. May be involved in transcriptional regulation. This Macaca fascicularis (Crab-eating macaque) protein is Zinc finger protein 512 (ZNF512).